A 435-amino-acid polypeptide reads, in one-letter code: Legumain (435 aa).

The N-terminal stretch at 1–17 is a signal peptide; it reads MTWRVAVLLSLVLGAGA. Asn93 carries N-linked (GlcNAc...) asparagine glycosylation. The active site involves His150. Asn169 is a glycosylation site (N-linked (GlcNAc...) asparagine). The active-site Nucleophile is Cys191. Residues Asn265 and Asn274 are each glycosylated (N-linked (GlcNAc...) asparagine). A propeptide spanning residues 326–435 is cleaved from the precursor; sequence DVKESQNLIG…AMDKVCLSHY (110 aa). 2 disulfide bridges follow: Cys380–Cys414 and Cys392–Cys431.

The protein belongs to the peptidase C13 family. Homodimer before autocatalytic removal of the propeptide. Monomer after autocatalytic processing. May interact with integrins. Glycosylated. In terms of processing, activated by autocatalytic processing at pH 4. As to expression, detected in kidney proximal tubules (at protein level). Ubiquitous. Particularly abundant in kidney and placenta.

The protein resides in the lysosome. The catalysed reaction is Hydrolysis of proteins and small molecule substrates at -Asn-|-Xaa- bonds.. With respect to regulation, inhibited by cystatin-C. Has a strict specificity for hydrolysis of asparaginyl bonds. Can also cleave aspartyl bonds slowly, especially under acidic conditions. Involved in the processing of proteins for MHC class II antigen presentation in the lysosomal/endosomal system. Also involved in MHC class I antigen presentation in cross-presenting dendritic cells by mediating cleavage and maturation of Perforin-2 (MPEG1), thereby promoting antigen translocation in the cytosol. Required for normal lysosomal protein degradation in renal proximal tubules. Required for normal degradation of internalized EGFR. Plays a role in the regulation of cell proliferation via its role in EGFR degradation. This Mus musculus (Mouse) protein is Legumain (Lgmn).